We begin with the raw amino-acid sequence, 291 residues long: Protease HtpX homolog (291 aa).

2 helical membrane passes run 4-24 and 38-58; these read IALF…TASL and LGAL…ISLL. Position 144 (histidine 144) interacts with Zn(2+). Residue glutamate 145 is part of the active site. Histidine 148 serves as a coordination point for Zn(2+). Transmembrane regions (helical) follow at residues 159-179 and 197-217; these read LIQG…GYFI and VTTV…VAWF. Glutamate 222 is a binding site for Zn(2+).

Belongs to the peptidase M48B family. Zn(2+) is required as a cofactor.

The protein resides in the cell inner membrane. This chain is Protease HtpX homolog, found in Leptothrix cholodnii (strain ATCC 51168 / LMG 8142 / SP-6) (Leptothrix discophora (strain SP-6)).